The following is a 161-amino-acid chain: Cytochrome c-type biogenesis protein CcmE (161 aa).

The Cytoplasmic portion of the chain corresponds to 1–8 (MNPRRKKR). The helical; Signal-anchor for type II membrane protein transmembrane segment at 9–29 (LGLILALFVGISATVGLMLYA) threads the bilayer. At 30–161 (LNQNMDLFYT…TEQQKQGTGQ (132 aa)) the chain is on the periplasmic side. 2 residues coordinate heme: His-129 and Tyr-133. The segment at 142 to 161 (MKKTHEPLQYTEQQKQGTGQ) is disordered. The span at 151-161 (YTEQQKQGTGQ) shows a compositional bias: polar residues.

The protein belongs to the CcmE/CycJ family.

Its subcellular location is the cell inner membrane. Functionally, heme chaperone required for the biogenesis of c-type cytochromes. Transiently binds heme delivered by CcmC and transfers the heme to apo-cytochromes in a process facilitated by CcmF and CcmH. The protein is Cytochrome c-type biogenesis protein CcmE of Aliivibrio fischeri (strain MJ11) (Vibrio fischeri).